Consider the following 495-residue polypeptide: Protein-serine O-palmitoleoyltransferase porcupine (495 aa).

The next 8 membrane-spanning stretches (helical) occupy residues 46–66 (TQYITNFIAINLLFSVLVLIV), 92–112 (VIDHGFYHFLQLAVSLYAVQW), 184–204 (TVLSYSGYILCPANIVLGPWI), 232–252 (MLIHVFRIVTSALMAVGFLLT), 358–378 (PFGTGTAIALTYIISSLLHGL), 403–422 (LATIYSACVLVGKCPSSCTV), 434–454 (VINMLFFALNIFNLIYLGCIF), and 475–495 (TELNYASHWLLVFAYLFYFVI). H376 is a catalytic residue.

The protein belongs to the membrane-bound acyltransferase family. Porcupine subfamily.

It localises to the endoplasmic reticulum membrane. It catalyses the reaction [Wnt protein]-L-serine + (9Z)-hexadecenoyl-CoA = [Wnt protein]-O-(9Z)-hexadecenoyl-L-serine + CoA. Its function is as follows. Protein-serine O-palmitoleoyltransferase that acts as a key regulator of the Wnt signaling pathway by mediating the attachment of palmitoleate, a 16-carbon monounsaturated fatty acid (C16:1(9Z)), to Wnt proteins. Serine palmitoleoylation of WNT proteins is required for efficient binding to frizzled receptors. The chain is Protein-serine O-palmitoleoyltransferase porcupine from Anopheles gambiae (African malaria mosquito).